Here is a 75-residue protein sequence, read N- to C-terminus: UPF0291 protein LMOf2365_1322 (75 aa).

The interval 56–75 (DPNGTDVTPHKVKQLRKNKH) is disordered. The span at 65–75 (HKVKQLRKNKH) shows a compositional bias: basic residues.

This sequence belongs to the UPF0291 family.

It is found in the cytoplasm. The chain is UPF0291 protein LMOf2365_1322 from Listeria monocytogenes serotype 4b (strain F2365).